Reading from the N-terminus, the 102-residue chain is MAMTKTKELVSSNAVVVFSKTYCPYCTSVKKLLDQLGAKYKVVELDTESDGSEIQTALAEWTGQRTVPNVFIGGKHIGGCDSTTAKHSQGQLVPLLTEAGAV.

Residues 3 to 102 form the Glutaredoxin domain; the sequence is MTKTKELVSS…VPLLTEAGAV (100 aa). Cys-23 and Cys-26 are joined by a disulfide.

The protein belongs to the glutaredoxin family. CPYC subfamily.

The protein resides in the cytoplasm. Its function is as follows. Has a glutathione-disulfide oxidoreductase activity in the presence of NADPH and glutathione reductase. Reduces low molecular weight disulfides and proteins. The protein is Glutaredoxin of Ricinus communis (Castor bean).